Consider the following 504-residue polypeptide: L-arabinose isomerase (504 aa).

Residues E308, E335, H352, and H452 each coordinate Mn(2+).

This sequence belongs to the arabinose isomerase family. It depends on Mn(2+) as a cofactor.

The catalysed reaction is beta-L-arabinopyranose = L-ribulose. The protein operates within carbohydrate degradation; L-arabinose degradation via L-ribulose; D-xylulose 5-phosphate from L-arabinose (bacterial route): step 1/3. Its function is as follows. Catalyzes the conversion of L-arabinose to L-ribulose. The sequence is that of L-arabinose isomerase from Bifidobacterium adolescentis (strain ATCC 15703 / DSM 20083 / NCTC 11814 / E194a).